The chain runs to 219 residues: 2-hydroxy-3-keto-5-methylthiopentenyl-1-phosphate phosphatase (219 aa).

It belongs to the HAD-like hydrolase superfamily. MtnX family.

It catalyses the reaction 2-hydroxy-5-methylsulfanyl-3-oxopent-1-enyl phosphate + H2O = 1,2-dihydroxy-5-(methylsulfanyl)pent-1-en-3-one + phosphate. Its pathway is amino-acid biosynthesis; L-methionine biosynthesis via salvage pathway; L-methionine from S-methyl-5-thio-alpha-D-ribose 1-phosphate: step 4/6. Functionally, dephosphorylates 2-hydroxy-3-keto-5-methylthiopentenyl-1-phosphate (HK-MTPenyl-1-P) yielding 1,2-dihydroxy-3-keto-5-methylthiopentene (DHK-MTPene). In Bacillus cereus (strain ATCC 14579 / DSM 31 / CCUG 7414 / JCM 2152 / NBRC 15305 / NCIMB 9373 / NCTC 2599 / NRRL B-3711), this protein is 2-hydroxy-3-keto-5-methylthiopentenyl-1-phosphate phosphatase.